A 211-amino-acid polypeptide reads, in one-letter code: Protein TMA23 (211 aa).

Positions 115–211 are disordered; it reads ASFVVSSASS…SARRDRKEHI (97 aa). The segment covering 116 to 125 has biased composition (low complexity); sequence SFVVSSASSS. Basic residues-rich tracts occupy residues 140-149, 158-176, and 185-197; these read VKRKKLKKDK, KKKKKKKSKKESKKGKKSK, and SKHKKSKKSKKHK. Positions 198–211 are enriched in basic and acidic residues; that stretch reads KEESSARRDRKEHI.

Forms homooligomers. Associates with ribosomal complexes.

The protein resides in the nucleus. It localises to the nucleolus. Functionally, trans-acting factors of the ribosome biogenesis process. The sequence is that of Protein TMA23 (TMA23) from Saccharomyces cerevisiae (strain ATCC 204508 / S288c) (Baker's yeast).